A 517-amino-acid chain; its full sequence is Mucin-like protein 3 (517 aa).

Positions 1–29 (MAQPVHSLCSAFGLQCCLLFLLASWGAGA) are cleaved as a signal peptide. Over 30 to 448 (TTFQEYQKTG…GENDSFPAWA (419 aa)) the chain is Extracellular. Residues 67–341 (SGQRPPELPK…PTENLGNTTL (275 aa)) are disordered. The segment covering 83–93 (QKRHCNTTRHS) has biased composition (basic residues). N-linked (GlcNAc...) asparagine glycosylation is present at asparagine 88. Over residues 105–116 (TIDHKSSTDNHE) the composition is skewed to basic and acidic residues. Asparagine 124 is a glycosylation site (N-linked (GlcNAc...) asparagine). Polar residues predominate over residues 169 to 179 (RKSTTGKSTVT). Over residues 180–190 (RKSDKTGRPLE) the composition is skewed to basic and acidic residues. Positions 194 to 213 (STLDKTSTSSHKTTTSFHNS) are enriched in low complexity. Polar residues-rich tracts occupy residues 214–225 (GNSQTKQKSTSF), 232–243 (ASKTTYKTTGTP), and 263–283 (TKTTKNIQETISANELTQSLA). Basic and acidic residues predominate over residues 305-317 (TENRERTANENKK). Asparagine 338 is a glycosylation site (N-linked (GlcNAc...) asparagine). The helical transmembrane segment at 449 to 469 (IVIVVLVAVILLLVFLGLIFL) threads the bilayer. Topologically, residues 470–517 (VSYMMRTRRTLTQNTQYNDAEDEGGPNSYPVYLMEQQNLGMGQIPSPR) are cytoplasmic.

In terms of tissue distribution, detected in lung, esophagus, stomach, rectum, skin, cervix, testis, kidney, uterus and small intestine. Expressed in pancreas (at protein level).

Its subcellular location is the cell membrane. It localises to the cytoplasm. May modulate NF-kappaB signaling and play a role in cell growth. This chain is Mucin-like protein 3, found in Homo sapiens (Human).